A 254-amino-acid chain; its full sequence is GPI alpha-1,4-mannosyltransferase I, stabilizing subunit (254 aa).

The N-terminal stretch at 1 to 22 is a signal peptide; the sequence is MAAGAVAWLLLWAAWLVGRLAA. Over 23–226 the chain is Lumenal; sequence DFSDAPFSAG…PVGLTIHTSL (204 aa). Asn211 carries N-linked (GlcNAc...) asparagine glycosylation. Residues 227–247 form a helical membrane-spanning segment; the sequence is VCSVTLLITILCSTLILLAVF. The Cytoplasmic segment spans residues 248 to 254; that stretch reads KYGHFSL.

It belongs to the PIGX family. As to quaternary structure, part of the glycosylphosphatidylinositol-mannosyltransferase I complex that is composed of PIGM and PIGX. Interacts with PIGM; PIGX stabilizes PIGM.

It is found in the endoplasmic reticulum membrane. It functions in the pathway glycolipid biosynthesis; glycosylphosphatidylinositol-anchor biosynthesis. In terms of biological role, stabilizing subunit of the glycosylphosphatidylinositol-mannosyltransferase I complex which catalyzes the transfer of the first mannose, via an alpha-1,4 bond from a dolichol-phosphate-mannose (Dol-P-Man) to the glucosaminyl acyl phosphatidylinositol (GlcN-(acyl)PI) intermediate to generate alpha-D-Man-(1-&gt;4)-alpha-D-GlcN-(1-&gt;6)-(1-radyl,2-acyl-sn-glycero-3-phospho)-2-acyl-inositol and participates in the sixth step of the glycosylphosphatidylinositol-anchor biosynthesis. Probably acts by stabilizing the mannosyltransferase PIGM. The protein is GPI alpha-1,4-mannosyltransferase I, stabilizing subunit of Mus musculus (Mouse).